The chain runs to 179 residues: Large ribosomal subunit protein uL6 (179 aa).

It belongs to the universal ribosomal protein uL6 family. Part of the 50S ribosomal subunit.

Its function is as follows. This protein binds to the 23S rRNA, and is important in its secondary structure. It is located near the subunit interface in the base of the L7/L12 stalk, and near the tRNA binding site of the peptidyltransferase center. This is Large ribosomal subunit protein uL6 from Finegoldia magna (strain ATCC 29328 / DSM 20472 / WAL 2508) (Peptostreptococcus magnus).